A 727-amino-acid polypeptide reads, in one-letter code: Plakophilin-1 (727 aa).

Positions 1–235 are required for binding to single stranded DNA; that stretch reads MNHSPLKTAL…SFSHSRASSK (235 aa). Residues 1–287 are required for interaction with EIF4A1; that stretch reads MNHSPLKTAL…ESAKQQVYQL (287 aa). Serine 4 is subject to Phosphoserine. Residues 48–69 are disordered; it reads TVKRQKSKSSQSSTLSHSNRGS. Phosphorylation in this region is required for cytoplasmic localization and protein stabilization stretches follow at residues 54-69 and 117-192; these read SKSS…NRGS and RFSS…STCS. Phosphoserine is present on residues serine 119, serine 120, serine 122, and serine 143. Residues 161–270 are required for WNT-mediated nuclear localization; the sequence is YCDPRGTLRK…KCQAIGAYYI (110 aa). ARM repeat units follow at residues 244–275, 276–317, 318–360, 361–412, 413–443, 505–536, 537–583, 584–629, and 630–693; these read SGLT…HTCF, QDES…NLVF, RSTT…NLSS, TDEL…GCLR, NLSS…NCVA, NYDC…LNLM, GKSK…IARL, LQSG…SHTG, and NTSN…DMWS.

Belongs to the beta-catenin family. In terms of assembly, part of a complex that contains DSG3, PKP1, YAP1 and YWHAG; the complex is required for localization of DSG3 and YAP1 to the cell membrane in keratinocytes. Interacts (via N-terminus) with KRT5/CK5, KRT8/CK8 (via rod domain), KRT15/CK15 and KRT18/CK18 (via rod domain) as part of intermediate filaments. Interacts with VIM (via rod domain). Interacts with DSP. Interacts with DES. Interacts with FXR1; the interaction may facilitate the binding of PKP1 to PKP2, PKP3 and DSP mRNA. Interacts (via N-terminus) with EIF4A1; the interaction promotes EIF4A1 recruitment to the cap-dependent translation complex and EIF4A1 ATPase activity. Interacts with TJP1/ZO-1; the interaction facilitates TJP1/ZO-1 localization to the plasma membrane. Interacts (when phosphorylated) with YWHAG; the interaction results in translocation of PKP1 to the cytoplasm and loss of intercellular adhesion in keratinocytes. Phosphorylated by AKT2; required for interaction with YWHAG and subsequent localization away from desmosomes to the cytoplasm. Phosphorylation of Ser-119 by AKT2 promotes PKP1-driven cap-dependent mRNA translation and decreases intercellular adhesion, phosphorylation is promoted by insulin. Phosphorylation by RIPK4 at the N-terminus is required for its role in differentiation of keratinocytes and DSG1 localization at cell junctions.

The protein localises to the nucleus. It is found in the cytoplasm. Its subcellular location is the perinuclear region. The protein resides in the cell junction. It localises to the desmosome. The protein localises to the cell membrane. It is found in the stress granule. In terms of biological role, a component of desmosome cell-cell junctions which are required for positive regulation of cellular adhesion. Plays a role in desmosome protein expression regulation and localization to the desmosomal plaque, thereby maintaining cell sheet integrity and anchorage of desmosomes to intermediate filaments. Required for localization of DSG3 and YAP1 to the cell membrane in keratinocytes in response to mechanical strain, via the formation of an interaction complex composed of DSG3, YAP1, PKP1 and YWHAG. Positively regulates differentiation of keratinocytes, potentially via promoting localization of DSG1 at desmosome cell junctions. Required for calcium-independent development and maturation of desmosome plaques specifically at lateral cell-cell contacts in differentiating keratinocytes. Plays a role in the maintenance of DSG3 protein abundance, DSG3 clustering and localization of these clusters to the cell membrane in keratinocytes. May also promote keratinocyte proliferation and morphogenesis during postnatal development. Required for tight junction inside-out transepidermal barrier function of the skin. Promotes Wnt-mediated proliferation and differentiation of ameloblasts, via facilitating TJP1/ZO-1 localization to tight junctions. Binds single-stranded DNA (ssDNA), and may thereby play a role in sensing DNA damage and promoting cell survival. Positively regulates cap-dependent translation and as a result cell proliferation, via recruitment of EIF4A1 to the initiation complex and promotion of EIF4A1 ATPase activity. Regulates the mRNA stability and protein abundance of desmosome components PKP2, PKP3, DSC2 and DSP, potentially via its interaction with FXR1. May facilitate the formation of intermediate filaments. This is Plakophilin-1 (PKP1) from Bos taurus (Bovine).